The primary structure comprises 862 residues: DNA replication licensing factor MCM4 (862 aa).

Residues 1-12 (MASRGGGGGGDG) are compositionally biased toward gly residues. A disordered region spans residues 1–132 (MASRGGGGGG…GGGGGGAGAD (132 aa)). 2 stretches are compositionally biased toward low complexity: residues 20–41 (SSPD…PQSG) and 52–64 (SASP…SLGG). The C4-type zinc finger occupies 289–317 (CLVCGFYSEPVMVDRGRVTEPHICQKEQC). The 207-residue stretch at 453 to 659 (IYDRLTRSLA…QTDRRLAKHI (207 aa)) folds into the MCM domain. ATP is bound at residue 503-510 (GDPGTSKS). The Arginine finger signature appears at 635 to 638 (SRFD).

This sequence belongs to the MCM family. Component of the minichromosome maintenance (MCM) complex, a heterotetramer composed of MCM2, MCM3, MCM4, MCM5, MCM6 and MCM7.

The protein resides in the nucleus. The catalysed reaction is ATP + H2O = ADP + phosphate + H(+). Its function is as follows. Probable component of the MCM2-7 complex (MCM complex) that may function as a DNA helicase and which is essential to undergo a single round of replication initiation and elongation per cell cycle in eukaryotic cells. In Oryza sativa subsp. japonica (Rice), this protein is DNA replication licensing factor MCM4 (MCM4).